The following is an 877-amino-acid chain: MVPSEPPNPVGGGENVPPSILGGQGGAPLPSQPAFPSLVSPRTQFGNNMSMSMLGNAPNISSLLNNQSFVNGIPGSMISMDTSGAESDPMSNVGFSGLSSFNASSMVSPRSSGQVQGQQFSNVSANQLLAEQQRNKKMETQSFQHGQQQSMQQQFSTVRGGGLAGVGPVKMEPGQVSNDQQHGQVQQQQQKMLRNLGSVKLEPQQIQAMRNLAQVKMEPQHSEQSLFLQQQQRQQQQQQQQQFLQMPGQSPQAQMNIFQQQRLMQLQQQQLLKSMPQQRPQLPQQFQQQNLPLRPPLKPVYEPGMGAQRLTQYMYRQQHRPEDNNIEFWRKFVAEYFAPNAKKRWCVSMYGSGRQTTGVFPQDVWHCEICNRKPGRGFEATAEVLPRLFKIKYESGTLEELLYVDMPRESQNSSGQIVLEYAKATQESVFEHLRVVRDGQLRIVFSPDLKIFSWEFCARRHEELIPRRLLIPQVSQLGSAAQKYQQAAQNATTDSALPELQNNCNMFVASARQLAKALEVPLVNDLGYTKRYVRCLQISEVVNSMKDLIDYSRETRTGPIESLAKFPRRTGPSSALPGPSPQQASDQLRQQQQQQQQQQQQQQQQQQQQQQQQTVSQNTNSDQSSRQVALMQGNPSNGVNYAFNAASASTSTSSIAGLIHQNSMKGRHQNAAYNPPNSPYGGNSVQMQSPSSSGTMVPSSSQQQHNLPTFQSPTSSSNNNNPSQNGIPSVNHMGSTNSPAMQQAGEVDGNESSSVQKILNEILMNNQAHNNSSGGSMVGHGSFGNDGKGQANVNSSGVLLMNGQVNNNNNTNIGGAGGFGGGIGQSMAANGINNINGNNSLMNGRVGMMVRDPNGQQDLGNQLLGAVNGFNNFDWNA.

Disordered stretches follow at residues 1 to 42 and 272 to 295; these read MVPS…VSPR and LKSM…PLRP. Low complexity predominate over residues 272-292; that stretch reads LKSMPQQRPQLPQQFQQQNLP. The dimerization stretch occupies residues 321-563; that stretch reads PEDNNIEFWR…ETRTGPIESL (243 aa). The Nuclear localization signal motif lies at 330–344; the sequence is RKFVAEYFAPNAKKR. Disordered stretches follow at residues 560-599, 612-633, and 666-753; these read IESL…QQQQ, QQTV…LMQG, and GRHQ…NESS. Positions 582 to 618 form a coiled coil; the sequence is QQASDQLRQQQQQQQQQQQQQQQQQQQQQQQQTVSQN. Positions 590–599 are enriched in low complexity; it reads QQQQQQQQQQ. Polar residues predominate over residues 614–633; that stretch reads TVSQNTNSDQSSRQVALMQG. Low complexity-rich tracts occupy residues 688 to 703 and 711 to 725; these read QSPS…SSQQ and QSPT…PSQN. Over residues 726–741 the composition is skewed to polar residues; that stretch reads GIPSVNHMGSTNSPAM.

It belongs to the adn1/SEU family. Forms a corepressor complex with LUG; LUG is the transcription repressor subunit and SEU the specific DNA-binding adapter. Interacts with AGL24-AP1 and SVP-AP1 dimers when complexed to SEU. Interacts with AP1/AGL7 and SEP3/AGL9. Binds to LUH. In terms of tissue distribution, expressed in root, leaves, seedlings, vegetative and reproductive shoot apical meristems, seeds, floral meristems and all floral organs.

The protein resides in the nucleus. Its subcellular location is the nucleoplasm. DNA-binding adapter subunit of the SEU-LUG transcriptional corepressor of the C class floral homeotic gene AGAMOUS during the early stages of floral meristem development. Is part of the A class cadastral complex that define the boundaries between the A and C class homeotic genes expression and function. Interacts together with APETALA2 and LEUNIG to repress AGAMOUS expression. In association with LUG, regulates petal shape through AGAMOUS-independent mechanisms. Controls cell division during petal development and enable the proper patterning of petal blade vasculature. Required for the proper elaboration of petal polarity along the adaxial/abaxial axis. May act through direct or indirect regulation of PHABULOSA and YAB1 and thus regulate cellular proliferation within the developing petal blade. In association with AINTEGUMENTA (ANT), coordinates patterning cues and cellular proliferation along the three positional axes of the developing gynoecium. Required for the development of the medial ridge and subsequent ovule initiation. The polypeptide is Transcriptional corepressor SEUSS (SEU) (Arabidopsis thaliana (Mouse-ear cress)).